The primary structure comprises 704 residues: ATP-dependent zinc metalloprotease FTSH 5, chloroplastic (704 aa).

The transit peptide at 1 to 58 (MATTSSNPLLLSSNFLGSQIIISAPTPKTTTKSLPFSVISRKRYQISQSEKLMKSLPS) directs the protein to the chloroplast. Residues 59 to 76 (QAALAALLFSSSSPQALA) constitute a thylakoid transit peptide. The helical transmembrane segment at 193–213 (FDFIGNLLFPLLAFGGLFYLF) threads the bilayer. 290–297 (GPPGTGKT) is a binding site for ATP. His-512 provides a ligand contact to Zn(2+). Glu-513 is a catalytic residue. The Zn(2+) site is built by His-516 and Asp-593.

It in the N-terminal section; belongs to the AAA ATPase family. This sequence in the C-terminal section; belongs to the peptidase M41 family. As to quaternary structure, heterohexamers with FTSH1, FTSH2 and FTSH8. Zn(2+) is required as a cofactor. As to expression, ubiquitous.

It is found in the plastid. It localises to the chloroplast thylakoid membrane. In terms of biological role, part of a complex that function as an ATP-dependent zinc metallopeptidase. Involved in the thylakoid formation and in the removal of damaged D1 in the photosystem II, preventing cell death under high-intensity light conditions. Not involved in the degradation of the light-harvesting complex of photosystem II (LHC II) or in thermotolerance. In Arabidopsis thaliana (Mouse-ear cress), this protein is ATP-dependent zinc metalloprotease FTSH 5, chloroplastic (FTSH5).